We begin with the raw amino-acid sequence, 320 residues long: Lipoyl synthase (320 aa).

Positions 67, 72, 78, 93, 97, 100, and 307 each coordinate [4Fe-4S] cluster. The region spanning 79–296 is the Radical SAM core domain; sequence FNHGTATFMI…REKANEMGFE (218 aa).

Belongs to the radical SAM superfamily. Lipoyl synthase family. Requires [4Fe-4S] cluster as cofactor.

It localises to the cytoplasm. It carries out the reaction [[Fe-S] cluster scaffold protein carrying a second [4Fe-4S](2+) cluster] + N(6)-octanoyl-L-lysyl-[protein] + 2 oxidized [2Fe-2S]-[ferredoxin] + 2 S-adenosyl-L-methionine + 4 H(+) = [[Fe-S] cluster scaffold protein] + N(6)-[(R)-dihydrolipoyl]-L-lysyl-[protein] + 4 Fe(3+) + 2 hydrogen sulfide + 2 5'-deoxyadenosine + 2 L-methionine + 2 reduced [2Fe-2S]-[ferredoxin]. Its pathway is protein modification; protein lipoylation via endogenous pathway; protein N(6)-(lipoyl)lysine from octanoyl-[acyl-carrier-protein]: step 2/2. In terms of biological role, catalyzes the radical-mediated insertion of two sulfur atoms into the C-6 and C-8 positions of the octanoyl moiety bound to the lipoyl domains of lipoate-dependent enzymes, thereby converting the octanoylated domains into lipoylated derivatives. The sequence is that of Lipoyl synthase from Glaesserella parasuis serovar 5 (strain SH0165) (Haemophilus parasuis).